A 183-amino-acid chain; its full sequence is NADH dehydrogenase [ubiquinone] iron-sulfur protein 4, mitochondrial (183 aa).

The transit peptide at 1 to 28 (MSALRQVMCRSTASLQLYQANRAAAARW) directs the protein to the mitochondrion. Ser-181 carries the phosphoserine modification.

Belongs to the complex I NDUFS4 subunit family.

The protein localises to the mitochondrion inner membrane. Functionally, accessory subunit of the mitochondrial membrane respiratory chain NADH dehydrogenase (Complex I), that is believed not to be involved in catalysis. Complex I functions in the transfer of electrons from NADH to the respiratory chain. The immediate electron acceptor for the enzyme is believed to be ubiquinone. This chain is NADH dehydrogenase [ubiquinone] iron-sulfur protein 4, mitochondrial, found in Drosophila melanogaster (Fruit fly).